Reading from the N-terminus, the 387-residue chain is Phosphoglycerate kinase (387 aa).

Substrate is bound by residues 21–23 (DLN), Arg36, 59–62 (HLGR), Arg113, and Arg146. ATP is bound by residues Lys197, Glu314, and 340–343 (GGDT).

The protein belongs to the phosphoglycerate kinase family. As to quaternary structure, monomer.

It localises to the cytoplasm. It carries out the reaction (2R)-3-phosphoglycerate + ATP = (2R)-3-phospho-glyceroyl phosphate + ADP. The protein operates within carbohydrate degradation; glycolysis; pyruvate from D-glyceraldehyde 3-phosphate: step 2/5. This is Phosphoglycerate kinase from Pseudomonas syringae pv. syringae (strain B728a).